The sequence spans 406 residues: Succinylornithine transaminase (406 aa).

Lysine 252 bears the N6-(pyridoxal phosphate)lysine mark.

Belongs to the class-III pyridoxal-phosphate-dependent aminotransferase family. AstC subfamily. It depends on pyridoxal 5'-phosphate as a cofactor.

The enzyme catalyses N(2)-succinyl-L-ornithine + 2-oxoglutarate = N-succinyl-L-glutamate 5-semialdehyde + L-glutamate. It functions in the pathway amino-acid degradation; L-arginine degradation via AST pathway; L-glutamate and succinate from L-arginine: step 3/5. Functionally, catalyzes the transamination of N(2)-succinylornithine and alpha-ketoglutarate into N(2)-succinylglutamate semialdehyde and glutamate. Can also act as an acetylornithine aminotransferase. The sequence is that of Succinylornithine transaminase from Escherichia coli O45:K1 (strain S88 / ExPEC).